The primary structure comprises 652 residues: Interferon-induced GTP-binding protein Mx1 (652 aa).

The disordered stretch occupies residues 1–27; the sequence is MKERTSACRHGTPQKHPDTSEESQAME. The Dynamin-type G domain maps to 58 to 331; it reads DLALPAIAVI…LTSHICKSLP (274 aa). A G1 motif region spans residues 68–75; the sequence is GDQSSGKS. Residue 68-75 coordinates GTP; the sequence is GDQSSGKS. Positions 93–95 are G2 motif; the sequence is VTR. A G3 motif region spans residues 169–172; the sequence is DLPG. Residues 169–173 and 238–241 contribute to the GTP site; these read DLPGI and TKPD. Residues 238-241 form a G4 motif region; it reads TKPD. A G5 motif region spans residues 270–273; sequence KCRG. Residues 332–357 form a bundle signaling element (BSE) region; the sequence is ILENQINVNHQIASEELQKYGADIPE. The interval 357–526 is middle domain; it reads EDDSKRLSFL…HFQMEHIVYC (170 aa). Residues 358 to 622 are stalk; that stretch reads DDSKRLSFLM…TSKCNWFLTE (265 aa). Residues 564-652 enclose the GED domain; that stretch reads TTEMTQHLNA…AQRKLAKFSN (89 aa).

Belongs to the TRAFAC class dynamin-like GTPase superfamily. Dynamin/Fzo/YdjA family. Homooligomer. Oligomerizes into multimeric filamentous or ring-like structures by virtue of its stalk domain. Oligomerization is critical for GTPase activity, protein stability, and recognition of viral target structures. Interacts with TRPC1, TRPC3, TRPC4, TRPC5, TRPC6 and TRPC7. Interacts with HSPA5. Interacts with TUBB/TUBB5. Interacts with DDX39A and DDX39B. Post-translationally, ISGylated.

It is found in the nucleus. It localises to the cytoplasm. The protein resides in the endoplasmic reticulum membrane. Its subcellular location is the perinuclear region. Functionally, interferon-induced dynamin-like GTPase which has antiviral activity against influenza A virus, (IAV) and Thogoto virus (THOV). Inhibits IAV by interfering with the process of primary transcription, probably by affecting the viral polymerase function. The chain is Interferon-induced GTP-binding protein Mx1 (Mx1) from Rattus norvegicus (Rat).